Reading from the N-terminus, the 241-residue chain is 1-(5-phosphoribosyl)-5-[(5-phosphoribosylamino)methylideneamino] imidazole-4-carboxamide isomerase (241 aa).

Asp8 serves as the catalytic Proton acceptor. Asp127 serves as the catalytic Proton donor.

This sequence belongs to the HisA/HisF family.

The protein localises to the cytoplasm. It carries out the reaction 1-(5-phospho-beta-D-ribosyl)-5-[(5-phospho-beta-D-ribosylamino)methylideneamino]imidazole-4-carboxamide = 5-[(5-phospho-1-deoxy-D-ribulos-1-ylimino)methylamino]-1-(5-phospho-beta-D-ribosyl)imidazole-4-carboxamide. It functions in the pathway amino-acid biosynthesis; L-histidine biosynthesis; L-histidine from 5-phospho-alpha-D-ribose 1-diphosphate: step 4/9. In Thermotoga petrophila (strain ATCC BAA-488 / DSM 13995 / JCM 10881 / RKU-1), this protein is 1-(5-phosphoribosyl)-5-[(5-phosphoribosylamino)methylideneamino] imidazole-4-carboxamide isomerase.